A 410-amino-acid polypeptide reads, in one-letter code: uncharacterized protein (410 aa).

The next 12 membrane-spanning stretches (helical) occupy residues 27 to 47, 63 to 83, 97 to 117, 118 to 138, 145 to 165, 180 to 200, 228 to 248, 254 to 274, 293 to 313, 316 to 332, 355 to 375, and 378 to 398; these read ILAL…VQSI, SLAL…TGPL, LFIA…ISIV, LLRA…MTYI, NSLS…GFLG, ISLM…LYFL, VLFF…TIFN, LMLE…TIYL, NNIL…TQYN, FIII…FFAS, YLFF…FFWF, and QWLG…FLSF.

Belongs to the major facilitator superfamily.

Its subcellular location is the cell membrane. This is an uncharacterized protein from Buchnera aphidicola subsp. Acyrthosiphon pisum (strain APS) (Acyrthosiphon pisum symbiotic bacterium).